Here is a 238-residue protein sequence, read N- to C-terminus: Enoyl-CoA delta isomerase 3 (238 aa).

It belongs to the enoyl-CoA hydratase/isomerase family.

The protein resides in the cytoplasm. Its subcellular location is the nucleus. The catalysed reaction is a (3Z)-enoyl-CoA = a 4-saturated (2E)-enoyl-CoA. It catalyses the reaction a (3E)-enoyl-CoA = a 4-saturated (2E)-enoyl-CoA. Its pathway is lipid metabolism; fatty acid beta-oxidation. Functionally, able to isomerize both 3-cis and 3-trans double bonds into the 2-trans form in a range of enoyl-CoA species. Essential for the beta oxidation of unsaturated fatty acids. This is Enoyl-CoA delta isomerase 3 from Arabidopsis thaliana (Mouse-ear cress).